A 327-amino-acid chain; its full sequence is GTPase Obg (327 aa).

Positions 1–159 (MQFIDQANII…WEVQLELKLL (159 aa)) constitute an Obg domain. Residues 160–327 (AEVGIIGLPN…PLLSEVWKRI (168 aa)) enclose the OBG-type G domain. Residues 166-173 (GLPNAGKS), 191-195 (FTTLI), 213-216 (DIPG), 280-283 (NKME), and 309-311 (SSS) each bind ATP. The Mg(2+) site is built by Ser-173 and Thr-193.

This sequence belongs to the TRAFAC class OBG-HflX-like GTPase superfamily. OBG GTPase family. Monomer. The cofactor is Mg(2+).

The protein resides in the cytoplasm. An essential GTPase which binds GTP, GDP and possibly (p)ppGpp with moderate affinity, with high nucleotide exchange rates and a fairly low GTP hydrolysis rate. Plays a role in control of the cell cycle, stress response, ribosome biogenesis and in those bacteria that undergo differentiation, in morphogenesis control. This chain is GTPase Obg, found in Prochlorococcus marinus subsp. pastoris (strain CCMP1986 / NIES-2087 / MED4).